A 142-amino-acid chain; its full sequence is Large-conductance mechanosensitive channel (142 aa).

Transmembrane regions (helical) follow at residues 15-35 (AFVM…GAAF), 38-58 (IVTS…IGNI), and 82-102 (GMFI…FVAI).

Belongs to the MscL family. Homopentamer.

The protein localises to the cell inner membrane. In terms of biological role, channel that opens in response to stretch forces in the membrane lipid bilayer. May participate in the regulation of osmotic pressure changes within the cell. In Fusobacterium nucleatum subsp. nucleatum (strain ATCC 25586 / DSM 15643 / BCRC 10681 / CIP 101130 / JCM 8532 / KCTC 2640 / LMG 13131 / VPI 4355), this protein is Large-conductance mechanosensitive channel.